A 427-amino-acid chain; its full sequence is 3-phosphoshikimate 1-carboxyvinyltransferase (427 aa).

3-phosphoshikimate-binding residues include Lys20, Ser21, and Arg25. A phosphoenolpyruvate-binding site is contributed by Lys20. Phosphoenolpyruvate-binding residues include Gly92 and Arg120. Residues Ser166, Gln168, Asp312, and Lys339 each coordinate 3-phosphoshikimate. A phosphoenolpyruvate-binding site is contributed by Gln168. Asp312 (proton acceptor) is an active-site residue. Positions 343 and 385 each coordinate phosphoenolpyruvate.

It belongs to the EPSP synthase family. As to quaternary structure, monomer.

It is found in the cytoplasm. It catalyses the reaction 3-phosphoshikimate + phosphoenolpyruvate = 5-O-(1-carboxyvinyl)-3-phosphoshikimate + phosphate. It functions in the pathway metabolic intermediate biosynthesis; chorismate biosynthesis; chorismate from D-erythrose 4-phosphate and phosphoenolpyruvate: step 6/7. Catalyzes the transfer of the enolpyruvyl moiety of phosphoenolpyruvate (PEP) to the 5-hydroxyl of shikimate-3-phosphate (S3P) to produce enolpyruvyl shikimate-3-phosphate and inorganic phosphate. This Streptococcus pneumoniae serotype 2 (strain D39 / NCTC 7466) protein is 3-phosphoshikimate 1-carboxyvinyltransferase.